We begin with the raw amino-acid sequence, 896 residues long: Glutamate receptor 2.4 (896 aa).

A signal peptide spans 1 to 24 (MKRHLNDVVLVFLVFIFGVKLGKG). Residues 25–565 (QNTTIQVINV…SSLIFFKPLT (541 aa)) lie on the Extracellular side of the membrane. N-linked (GlcNAc...) asparagine glycans are attached at residues N26, N46, N53, N204, N267, N331, N341, and N527. The helical transmembrane segment at 566–586 (PGLWGMTLGSFFVVGFVVWIL) threads the bilayer. Residues 587–595 (EHRVNSEFT) lie on the Cytoplasmic side of the membrane. A helical transmembrane segment spans residues 596–616 (GPPQYQISTMFWFAFSIMVFA). At 617–620 (PRER) the chain is on the cytoplasmic side. The chain crosses the membrane as a helical span at residues 621-641 (VMSFTARVVVITWYFIVLVLT). The Extracellular portion of the chain corresponds to 642–815 (QSYTASLSSL…VSFRKLSLDS (174 aa)). The chain crosses the membrane as a helical span at residues 816 to 836 (FLLLFVAAATVCTLALLKFVI). At 837 to 896 (CFLIQNRIILNDEFYRGKRMKEMWLKFMESDGESYISRVRSTCPQVLIQPREEDIDPING) the chain is on the cytoplasmic side.

This sequence belongs to the glutamate-gated ion channel (TC 1.A.10.1) family. May form heteromers. As to expression, expressed predominantly in roots.

It is found in the membrane. In terms of biological role, glutamate-gated receptor that probably acts as a non-selective cation channel. May be involved in light-signal transduction and calcium homeostasis via the regulation of calcium influx into cells. The chain is Glutamate receptor 2.4 (GLR2.4) from Arabidopsis thaliana (Mouse-ear cress).